A 216-amino-acid chain; its full sequence is Heart- and neural crest derivatives-expressed protein 2 (216 aa).

Residues 74–115 (MDHSHYGGVPPGSGPPGLGGPRPVKRRGTANRKERRRTQSIN) form a disordered region. Gly residues predominate over residues 82-93 (VPPGSGPPGLGG). A compositionally biased stretch (basic residues) spans 96–111 (PVKRRGTANRKERRRT). The region spanning 98–150 (KRRGTANRKERRRTQSINSAFAELRECIPNVPADTKLSKIKTLRLATSYIAYL) is the bHLH domain.

As to quaternary structure, efficient DNA binding requires dimerization with another bHLH protein.

Its subcellular location is the nucleus. Its function is as follows. Essential for cardiac morphogenesis. Binds DNA on E-box consensus sequence 5'-CANNTG-3'. Plays an important role in limb development, particularly in the establishment of anterior-posterior polarization of the limb bud. The chain is Heart- and neural crest derivatives-expressed protein 2 (HAND2) from Gallus gallus (Chicken).